The sequence spans 228 residues: MARKGEPPSYIKALTPEIVSAVIPEAYPLFVYESKHWSSGFPIPENSNRSTGRYDDWVYDLARTKKGTTLAFAGRMGSGKDHACDYCISKIGGEKVHVFDAGLMRATKFLGRPIEKPRDRPFLQAIGDLGRRLDANFWVRDAIEKIVAPMWSRGVNVFITGVRFPTEIEALAGLGVRTVLIRRPRILTGSPMERHRSETALDEYRDCPEILNDSTIAAFEDRVSTFLP.

This is an uncharacterized protein from Ictalurid herpesvirus 1 (strain Auburn) (IcHV-1).